Here is a 1996-residue protein sequence, read N- to C-terminus: Protein Shroom3 (1996 aa).

In terms of domain architecture, PDZ spans Tyr-25–Val-110. Residues Lys-150 to Pro-173 form a disordered region. A Phosphoserine modification is found at Ser-213. 5 disordered regions span residues Asn-340–Ser-389, Glu-437–Tyr-468, Asp-568–Asp-629, Arg-673–Phe-772, and Phe-788–Ser-1053. Phosphoserine occurs at positions 439 and 443. Positions Lys-700–Arg-718 are enriched in basic and acidic residues. Residues His-750–Ala-768 show a composition bias toward low complexity. The span at Thr-814 to Asn-823 shows a compositional bias: polar residues. At Ser-816 the chain carries Phosphoserine. Composition is skewed to basic and acidic residues over residues Glu-826–Glu-836 and Gln-846–Ser-859. Polar residues-rich tracts occupy residues Pro-862–Ala-871 and Arg-887–Ser-896. Ser-890 bears the Phosphoserine mark. A compositionally biased stretch (basic and acidic residues) spans Glu-897–Gly-909. Ser-910 and Ser-913 each carry phosphoserine. The ASD1 domain occupies Ile-928–Gly-1030. The segment covering Ala-950–Ala-964 has biased composition (low complexity). A Phosphoserine modification is found at Ser-970. Basic and acidic residues predominate over residues Leu-1011 to Asn-1027. A phosphoserine mark is found at Ser-1069 and Ser-1072. Disordered stretches follow at residues Lys-1093–Arg-1115, Ser-1137–Glu-1223, Glu-1315–Lys-1573, and Ser-1627–Asp-1665. Residues Ser-1137–Gln-1148 are compositionally biased toward low complexity. Ser-1221 is subject to Phosphoserine. Residues Tyr-1366–Arg-1375 are compositionally biased toward polar residues. Basic and acidic residues predominate over residues Cys-1403–Arg-1417. A Phosphoserine modification is found at Ser-1441. Over residues Lys-1459–Pro-1472 the composition is skewed to polar residues. Basic and acidic residues predominate over residues Pro-1498–Pro-1515. Residues Glu-1524–Gln-1536 show a composition bias toward pro residues. Over residues Pro-1634 to Gln-1649 the composition is skewed to polar residues. Basic and acidic residues predominate over residues Leu-1651–Asp-1665. In terms of domain architecture, ASD2 spans Glu-1669–Pro-1957.

This sequence belongs to the shroom family. In terms of assembly, interacts with F-actin. Interacts with ROCK1.

The protein resides in the cell junction. It localises to the adherens junction. It is found in the cytoplasm. Its subcellular location is the cytoskeleton. The protein localises to the apical cell membrane. Functionally, controls cell shape changes in the neuroepithelium during neural tube closure. Induces apical constriction in epithelial cells by promoting the apical accumulation of F-actin and myosin II, and probably by bundling stress fibers. Induces apicobasal cell elongation by redistributing gamma-tubulin and directing the assembly of robust apicobasal microtubule arrays. In Homo sapiens (Human), this protein is Protein Shroom3 (SHROOM3).